Reading from the N-terminus, the 479-residue chain is mRNA export factor ICP27 homolog (479 aa).

A compositionally biased stretch (low complexity) spans 1 to 15 (MVPSQRLSRTSSISS). Disordered stretches follow at residues 1–77 (MVPS…PSSV) and 91–210 (KKWD…NKPW). The span at 35-44 (TDCDLDPMEG) shows a compositional bias: acidic residues. Residues 61–146 (DEDPTPAHAI…TDESYGKRRH (86 aa)) are nuclear export signal and interaction with host NXF1. A nuclear localization signal region spans residues 127 to 130 (KRRR). Residues 132–142 (EVHGCTDESYG) show a composition bias toward basic and acidic residues. A nuclear localization signal region spans residues 143–145 (KRR). Cys-354, His-445, Cys-449, and Cys-454 together coordinate Zn(2+). The CHC2-type zinc finger occupies 354-454 (CFLPNTRDYN…HTRDCRSASC (101 aa)).

Belongs to the HHV-1 ICP27 protein family. As to quaternary structure, interacts with host XPO1 and with the XPO1 export pathway components small GTPase RAN and nucleoporin NUP214. Interacts with host SPEN, OTT1 and OTT3. Interacts with host SRSF1, SRSF3, SRSF7 and SRPK1. Interacts with host DHX9; this interaction may have an inhibitory effect on virion production. Interacts (via N-terminus) with host NXF1; this interaction plays a role in mRNA export. Phosphorylated by cellular protein kinase CK2.

It is found in the host nucleus. The protein resides in the host cytoplasm. Functionally, promotes the nuclear export of a subset of early and late viral mRNAs by interacting with mRNAs and cellular export proteins. Additionally may prevent the establishment of cellular antiviral state, by acting as an alternative splicing factor for cellular RNAs such as STAT1, resulting in a STAT1 mRNA incapable of producing the STAT1alpha isoform. The protein is mRNA export factor ICP27 homolog of Homo sapiens (Human).